Consider the following 394-residue polypeptide: Obg-like ATPase 1 (394 aa).

The 258-residue stretch at 25 to 282 (LKIGIVGLPN…MPPDEAAKYC (258 aa)) folds into the OBG-type G domain. ATP contacts are provided by residues 34–39 (NVGKST), 56–60 (FCTID), and 94–97 (DIAG). 34–39 (NVGKST) is a binding site for GTP. Residues Ser-38 and Thr-58 each contribute to the Mg(2+) site. Residues Phe-129 and Asn-230 each coordinate GTP. Residues 230–231 (NM), Met-231, and 263–265 (SCA) each bind ATP. 263–265 (SCA) provides a ligand contact to GTP. The 84-residue stretch at 303-386 (HLIYFFTAGP…QDGDIIFFKF (84 aa)) folds into the TGS domain.

The protein belongs to the TRAFAC class OBG-HflX-like GTPase superfamily. OBG GTPase family. YchF/OLA1 subfamily. As to quaternary structure, monomer (Potential). Interacts with GAP1. The cofactor is Mg(2+).

The protein localises to the cell membrane. It localises to the cytoplasm. The protein resides in the cytosol. Its activity is regulated as follows. Activated by GAP1. In terms of biological role, hydrolyzes ATP, and can also hydrolyze GTP with lower efficiency. Has lower affinity for GTP (Potential). Exhibits GTPase activity. Exhibits similar binding affinities and hydrolytic activities toward both GTP and ATP. Binds to the 26 S ribosomal RNA in vitro, but not to the 5.8 S or 18 S rRNA. Confers sensitivity to salinity stress by suppressing the anti-oxidation enzymatic activities and increasing lipid peroxidation thus leading to the accumulation of reactive oxygen species (ROS). In Oryza sativa subsp. japonica (Rice), this protein is Obg-like ATPase 1.